The chain runs to 67 residues: Small, acid-soluble spore protein 2 (67 aa).

The protein belongs to the alpha/beta-type SASP family.

Functionally, SASP are bound to spore DNA. They are double-stranded DNA-binding proteins that cause DNA to change to an a-like conformation. They protect the DNA backbone from chemical and enzymatic cleavage and are thus involved in dormant spore's high resistance to UV light. This Sporosarcina ureae protein is Small, acid-soluble spore protein 2 (Su-2).